The following is a 427-amino-acid chain: Adenylosuccinate synthetase (427 aa).

Residues 13-19 (GDEGKGK) and 41-43 (GHT) contribute to the GTP site. Residue Asp14 is the Proton acceptor of the active site. Asp14 and Gly41 together coordinate Mg(2+). IMP-binding positions include 14–17 (DEGK), 39–42 (NAGH), Thr129, Arg143, Gln224, Thr239, and Arg303. Catalysis depends on His42, which acts as the Proton donor. The segment at 117–137 (QEKQRGEESLGTTKRGIGPAY) is disordered. Residue 299–305 (TTTGRPR) coordinates substrate. Residues Arg305, 331-333 (KLD), and 414-416 (GTG) contribute to the GTP site.

It belongs to the adenylosuccinate synthetase family. As to quaternary structure, homodimer. Mg(2+) is required as a cofactor.

Its subcellular location is the cytoplasm. It carries out the reaction IMP + L-aspartate + GTP = N(6)-(1,2-dicarboxyethyl)-AMP + GDP + phosphate + 2 H(+). It participates in purine metabolism; AMP biosynthesis via de novo pathway; AMP from IMP: step 1/2. Functionally, plays an important role in the de novo pathway of purine nucleotide biosynthesis. Catalyzes the first committed step in the biosynthesis of AMP from IMP. The chain is Adenylosuccinate synthetase from Caldicellulosiruptor saccharolyticus (strain ATCC 43494 / DSM 8903 / Tp8T 6331).